Here is a 350-residue protein sequence, read N- to C-terminus: S-adenosylmethionine:tRNA ribosyltransferase-isomerase (350 aa).

The protein belongs to the QueA family. As to quaternary structure, monomer.

It localises to the cytoplasm. The catalysed reaction is 7-aminomethyl-7-carbaguanosine(34) in tRNA + S-adenosyl-L-methionine = epoxyqueuosine(34) in tRNA + adenine + L-methionine + 2 H(+). It functions in the pathway tRNA modification; tRNA-queuosine biosynthesis. Its function is as follows. Transfers and isomerizes the ribose moiety from AdoMet to the 7-aminomethyl group of 7-deazaguanine (preQ1-tRNA) to give epoxyqueuosine (oQ-tRNA). The chain is S-adenosylmethionine:tRNA ribosyltransferase-isomerase from Bacillus cereus (strain 03BB102).